The chain runs to 707 residues: MPYLDHAGSTLPSKTQLEELAKLQTQLILANPHSHHSTAIKTQQIVSSARHRILRYFNTTADDYFVVFTNNTTHALKIVAENFNFGHRTQEGVVSEISAVLKGGPSNFAYFNDSHHSVVGLRHVVLGKVDAISCVNEDVVKEECIPKVENSLFVFTAMSNFLIPFQINEKLISGWSVCVDAAALVSGTRLDLTAHRPNFVAFSFYKIFGYPTGIGALLVKKDSSKSIEKTSFAGGTVQSVDEMTMHFVIRDFERAYEEGTINSYGIAQLQKGFEEIERCGGMQAIRAHTYDLRSKAVQILQSKTHPNGKKVVEIYSQPHIQVSPETQGAIVAFNLVRPDNGYYGYTEVEKMCAIFGIELRTGCFCNIGACKKYLGITSEMIKENMSKGKRCGDEIDLINGRPTGAVRISFGRMSTEQDIEVLKQMIDTCFVSSEKVFSPSLQSLKIDSFLPTVVNLFSFPIKSVGSVAKSRYELTPRGFKHDREFLVVKDDVTLNLKMHPELCRLTATIVNDEELHIQTFDQNDNLVIPMSLSLKENDAKVVCKKTIATFDCGDKVGQWLENALDMTNCRLLRVAGESKKNFVNDSPFLLINEASVYMLARHIDMDVQDILTRFRSNIVVRGLPPFIEDTAKRLSIENLEFEVVDKCTRCEMICVDPMTGEKDPSLLLALRDYRNKQKMTFGIYIRQSNFEPGQFVEAGSAVRFFTD.

The residue at position 206 (Lys206) is an N6-(pyridoxal phosphate)lysine. The active site involves Cys365. Positions 558 to 705 (QWLENALDMT…VEAGSAVRFF (148 aa)) constitute an MOSC domain.

This sequence belongs to the class-V pyridoxal-phosphate-dependent aminotransferase family. MOCOS subfamily. Pyridoxal 5'-phosphate is required as a cofactor.

The catalysed reaction is Mo-molybdopterin + L-cysteine + AH2 = thio-Mo-molybdopterin + L-alanine + A + H2O. It functions in the pathway cofactor biosynthesis; molybdopterin biosynthesis. Its function is as follows. Sulfurates the molybdenum cofactor. Sulfation of molybdenum is essential for xanthine dehydrogenase (XDH) and aldehyde oxidase (ADO) enzymes in which molybdenum cofactor is liganded by 1 oxygen and 1 sulfur atom in active form. In Caenorhabditis briggsae, this protein is Molybdenum cofactor sulfurase (mocs-1).